We begin with the raw amino-acid sequence, 230 residues long: Flagellar L-ring protein (230 aa).

Positions 1 to 15 (MSRLPSLSSLCLAIA) are cleaved as a signal peptide. Cysteine 16 carries N-palmitoyl cysteine lipidation. A lipid anchor (S-diacylglycerol cysteine) is attached at cysteine 16.

Belongs to the FlgH family. As to quaternary structure, the basal body constitutes a major portion of the flagellar organelle and consists of four rings (L,P,S, and M) mounted on a central rod.

Its subcellular location is the cell outer membrane. It is found in the bacterial flagellum basal body. Its function is as follows. Assembles around the rod to form the L-ring and probably protects the motor/basal body from shearing forces during rotation. This chain is Flagellar L-ring protein, found in Xanthomonas campestris pv. campestris (strain 8004).